A 457-amino-acid chain; its full sequence is BAG family molecular chaperone regulator 4 (457 aa).

Residues 1 to 20 are compositionally biased toward low complexity; that stretch reads MSALRRSGYGPSDGPSYGRY. The segment at 1–104 is disordered; the sequence is MSALRRSGYG…PYPGYNSNYW (104 aa). S7 is modified (phosphoserine). The segment covering 31–48 has biased composition (pro residues); the sequence is HVPPPLYPPLRPEPPQPP. 4 positions are modified to omega-N-methylarginine: R41, R54, R108, and R185. Disordered stretches follow at residues 128-335 and 348-374; these read LNSY…SDLL and YGNA…SSDE. Residues 160–193 are compositionally biased toward polar residues; the sequence is YTQSNYSTEVPNTYRSPGNSPTPMSRWMYSQQDC. The segment covering 255-268 has biased composition (low complexity); that stretch reads PWPSAAPSAPSAGS. Residues 284–295 are compositionally biased toward pro residues; the sequence is PQPPPSPPPQQP. Composition is skewed to polar residues over residues 326–335 and 348–365; these read AVNNDNSDLL and YGNA…SNNL. Residues 379–456 form the BAG domain; the sequence is SIKKIIHVLE…AILEKLEKKG (78 aa).

As to quaternary structure, binds to the ATPase domain of HSP/HSC70 chaperones. Binds to the death domain of TNFRSF12. Binds to the death domain of TNFRSF1A in the absence of TNF and thereby prevents binding of adapter molecules such as TRADD or TRAF2. Interacts with PRKN.

The protein resides in the cytoplasm. Its function is as follows. Inhibits the chaperone activity of HSP70/HSC70 by promoting substrate release. Prevents constitutive TNFRSF1A signaling. Negative regulator of PRKN translocation to damaged mitochondria. The protein is BAG family molecular chaperone regulator 4 (Bag4) of Mus musculus (Mouse).